Reading from the N-terminus, the 330-residue chain is Flotillin-like protein FloA (330 aa).

Transmembrane regions (helical) follow at residues 6–26 and 28–48; these read LFLLLIIAAGIILLAVFFTFV and VMLWISALAAGVKISIFTLIG.

Belongs to the flotillin-like FloA family. Homooligomerizes.

The protein localises to the cell membrane. The protein resides in the membrane raft. Functionally, found in functional membrane microdomains (FMM) that may be equivalent to eukaryotic membrane rafts. FMMs are highly dynamic and increase in number as cells age. Flotillins are thought to be important factors in membrane fluidity. This chain is Flotillin-like protein FloA, found in Bacillus licheniformis (strain ATCC 14580 / DSM 13 / JCM 2505 / CCUG 7422 / NBRC 12200 / NCIMB 9375 / NCTC 10341 / NRRL NRS-1264 / Gibson 46).